Consider the following 361-residue polypeptide: Fructose-bisphosphate aldolase (361 aa).

D-glyceraldehyde 3-phosphate is bound at residue Ser-63. Asp-110 serves as the catalytic Proton donor. Zn(2+)-binding residues include His-111, Asp-145, Glu-175, and His-227. Gly-228 contributes to the dihydroxyacetone phosphate binding site. A Zn(2+)-binding site is contributed by His-266. Dihydroxyacetone phosphate-binding positions include 267–269 (GGS) and 288–291 (NLDT).

The protein belongs to the class II fructose-bisphosphate aldolase family. In terms of assembly, homodimer. Zn(2+) serves as cofactor.

The enzyme catalyses beta-D-fructose 1,6-bisphosphate = D-glyceraldehyde 3-phosphate + dihydroxyacetone phosphate. Its pathway is carbohydrate degradation; glycolysis; D-glyceraldehyde 3-phosphate and glycerone phosphate from D-glucose: step 4/4. In terms of biological role, catalyzes the aldol condensation of dihydroxyacetone phosphate (DHAP or glycerone-phosphate) with glyceraldehyde 3-phosphate (G3P) to form fructose 1,6-bisphosphate (FBP) in gluconeogenesis and the reverse reaction in glycolysis. The chain is Fructose-bisphosphate aldolase (FBA1) from Kluyveromyces lactis (strain ATCC 8585 / CBS 2359 / DSM 70799 / NBRC 1267 / NRRL Y-1140 / WM37) (Yeast).